Consider the following 267-residue polypeptide: NAD kinase (267 aa).

Residue Asp45 is the Proton acceptor of the active site. NAD(+) is bound by residues 45-46, 122-123, Arg148, Asp150, 161-166, Ala185, and Gln223; these read DG, NE, and TAYNKS.

This sequence belongs to the NAD kinase family. It depends on a divalent metal cation as a cofactor.

The protein resides in the cytoplasm. It carries out the reaction NAD(+) + ATP = ADP + NADP(+) + H(+). Its function is as follows. Involved in the regulation of the intracellular balance of NAD and NADP, and is a key enzyme in the biosynthesis of NADP. Catalyzes specifically the phosphorylation on 2'-hydroxyl of the adenosine moiety of NAD to yield NADP. The protein is NAD kinase of Levilactobacillus brevis (strain ATCC 367 / BCRC 12310 / CIP 105137 / JCM 1170 / LMG 11437 / NCIMB 947 / NCTC 947) (Lactobacillus brevis).